The chain runs to 131 residues: uncharacterized protein (131 aa).

3 helical membrane-spanning segments follow: residues 13-35, 60-79, and 100-119; these read RFIK…TFPI, LVAL…TYVC, and LFEI…WNIT.

The protein localises to the membrane. This is an uncharacterized protein from Saccharomyces cerevisiae (strain ATCC 204508 / S288c) (Baker's yeast).